Reading from the N-terminus, the 241-residue chain is uncharacterized protein (241 aa).

Positions 22 to 78 constitute a Cupin type-2 domain; sequence SHKHAYSQFLFPLEGSIDLETEGRQVKLNPDHFLYIPPQCEHRFRSIGRNECLVLDV. The 99-residue stretch at 137-235 folds into the HTH araC/xylS-type domain; it reads YASIAYIHSH…GMPPRLYRNT (99 aa). 2 DNA-binding regions (H-T-H motif) span residues 154–175 and 202–225; these read KKLA…KKQT and LTVV…TKST.

This is an uncharacterized protein from Bacillus subtilis (strain 168).